Consider the following 382-residue polypeptide: Opsin Rh5 (382 aa).

Residues 1-49 (MHINGPSGPQAYVNDSLGDGSVFPMGHGYPAEYQHMVHAHWRGFREAPI) lie on the Extracellular side of the membrane. N-linked (GlcNAc...) asparagine glycosylation occurs at Asn-14. The helical transmembrane segment at 50 to 76 (YYHAGFYIAFIVLMLSSIFGNGLVIWI) threads the bilayer. The Cytoplasmic segment spans residues 77-88 (FSTSKSLRTPSN). The helical transmembrane segment at 89–112 (LLILNLAIFDLFMCTNMPHYLINA) threads the bilayer. The Extracellular portion of the chain corresponds to 113–127 (TVGYIVGGDLGCDIY). Cys-124 and Cys-201 are joined by a disulfide. A helical transmembrane segment spans residues 128 to 147 (ALNGGISGMGASITNAFIAF). The Cytoplasmic segment spans residues 148–165 (DRYKTISNPIDGRLSYGQ). The helical transmembrane segment at 166–190 (IVLLILFTWLWATPFSVLPLFQIWG) threads the bilayer. Topologically, residues 191-214 (RYQPEGFLTTCSFDYLTNTDENRL) are extracellular. Residues 215–242 (FVRTIFVWSYVIPMTMILVSYYKLFTHV) form a helical membrane-spanning segment. Residues 243–278 (RVHEKMLAEQAKKMNVKSLSANANADNMSVELRIAK) lie on the Cytoplasmic side of the membrane. A helical membrane pass occupies residues 279–302 (AALIIYMLFILAWTPYSVVALIGC). Residues 303–310 (FGEQQLIT) lie on the Extracellular side of the membrane. Residues 311 to 335 (PFVSMLPCLACKSVSCLDPWVYATS) form a helical membrane-spanning segment. Lys-322 is modified (N6-(retinylidene)lysine). Over 336 to 382 (HPKYRLELERRLPWLGIREKHATSGTSGGQESVASVSGDTLALSVQN) the chain is Cytoplasmic. The disordered stretch occupies residues 357–382 (ATSGTSGGQESVASVSGDTLALSVQN). A compositionally biased stretch (polar residues) spans 358–382 (TSGTSGGQESVASVSGDTLALSVQN).

It belongs to the G-protein coupled receptor 1 family. Opsin subfamily. Post-translationally, phosphorylated on some or all of the serine and threonine residues present in the C-terminal region. In terms of tissue distribution, expressed specifically in the retina. Each Drosophila eye is composed of 800 facets or ommatidia. Each ommatidium contains 8 photoreceptor cells (R1-R8), the R1 to R6 cells are outer cells, while R7 and R8 are inner cells. Rh5 is expressed only in R8 photoreceptor cells in a subset of ommatidia.

The protein localises to the cell projection. Its subcellular location is the rhabdomere membrane. In terms of biological role, visual pigments are the light-absorbing molecules that mediate vision. They consist of an apoprotein, opsin, covalently linked to cis-retinal. The chain is Opsin Rh5 (Rh5) from Drosophila melanogaster (Fruit fly).